The primary structure comprises 229 residues: ATP-dependent dethiobiotin synthetase BioD (229 aa).

12–17 is a binding site for ATP; that stretch reads GVGKTV. Threonine 16 serves as a coordination point for Mg(2+). Lysine 37 is a catalytic residue. Residue threonine 41 coordinates substrate. ATP-binding positions include aspartate 53, 112-115, and 201-203; these read EGAG and PAG. Aspartate 53 and glutamate 112 together coordinate Mg(2+).

Belongs to the dethiobiotin synthetase family. In terms of assembly, homodimer. Mg(2+) serves as cofactor.

It is found in the cytoplasm. The enzyme catalyses (7R,8S)-7,8-diammoniononanoate + CO2 + ATP = (4R,5S)-dethiobiotin + ADP + phosphate + 3 H(+). The protein operates within cofactor biosynthesis; biotin biosynthesis; biotin from 7,8-diaminononanoate: step 1/2. Its function is as follows. Catalyzes a mechanistically unusual reaction, the ATP-dependent insertion of CO2 between the N7 and N8 nitrogen atoms of 7,8-diaminopelargonic acid (DAPA, also called 7,8-diammoniononanoate) to form a ureido ring. This Mycobacterium sp. (strain KMS) protein is ATP-dependent dethiobiotin synthetase BioD.